A 115-amino-acid chain; its full sequence is Ribonuclease P protein component (115 aa).

The protein belongs to the RnpA family. Consists of a catalytic RNA component (M1 or rnpB) and a protein subunit.

The enzyme catalyses Endonucleolytic cleavage of RNA, removing 5'-extranucleotides from tRNA precursor.. RNaseP catalyzes the removal of the 5'-leader sequence from pre-tRNA to produce the mature 5'-terminus. It can also cleave other RNA substrates such as 4.5S RNA. The protein component plays an auxiliary but essential role in vivo by binding to the 5'-leader sequence and broadening the substrate specificity of the ribozyme. The protein is Ribonuclease P protein component of Staphylococcus carnosus (strain TM300).